The chain runs to 537 residues: Chaperonin GroEL (537 aa).

Residues 29–32, 86–90, Gly413, 477–479, and Asp493 each bind ATP; these read TLGP, DGTTT, and NAA.

This sequence belongs to the chaperonin (HSP60) family. As to quaternary structure, forms a cylinder of 14 subunits composed of two heptameric rings stacked back-to-back. Interacts with the co-chaperonin GroES.

It is found in the cytoplasm. The enzyme catalyses ATP + H2O + a folded polypeptide = ADP + phosphate + an unfolded polypeptide.. Together with its co-chaperonin GroES, plays an essential role in assisting protein folding. The GroEL-GroES system forms a nano-cage that allows encapsulation of the non-native substrate proteins and provides a physical environment optimized to promote and accelerate protein folding. This Bifidobacterium animalis subsp. lactis (strain AD011) protein is Chaperonin GroEL.